A 362-amino-acid chain; its full sequence is NAD(P)H-quinone oxidoreductase subunit 1, chloroplastic (362 aa).

8 helical membrane passes run 27–47, 103–123, 128–148, 164–184, 202–222, 247–267, 303–323, and 342–362; these read IWIL…LVIV, IAVI…HFVL, IGVF…LMAG, AAQS…ISLL, FFGW…ISSL, YSGI…LVSS, VIGI…SITI, and FLLP…LVSL.

It belongs to the complex I subunit 1 family. In terms of assembly, NDH is composed of at least 16 different subunits, 5 of which are encoded in the nucleus.

The protein localises to the plastid. The protein resides in the chloroplast thylakoid membrane. It catalyses the reaction a plastoquinone + NADH + (n+1) H(+)(in) = a plastoquinol + NAD(+) + n H(+)(out). It carries out the reaction a plastoquinone + NADPH + (n+1) H(+)(in) = a plastoquinol + NADP(+) + n H(+)(out). Its function is as follows. NDH shuttles electrons from NAD(P)H:plastoquinone, via FMN and iron-sulfur (Fe-S) centers, to quinones in the photosynthetic chain and possibly in a chloroplast respiratory chain. The immediate electron acceptor for the enzyme in this species is believed to be plastoquinone. Couples the redox reaction to proton translocation, and thus conserves the redox energy in a proton gradient. The protein is NAD(P)H-quinone oxidoreductase subunit 1, chloroplastic of Saccharum hybrid (Sugarcane).